The following is a 308-amino-acid chain: 4-hydroxyproline 2-epimerase (308 aa).

Residue Cys-88 is the Proton acceptor of the active site. Residues 89–90 (GH), His-208, and Asp-232 each bind substrate. Catalysis depends on Cys-236, which acts as the Proton donor. 237-238 (GT) serves as a coordination point for substrate.

This sequence belongs to the proline racemase family.

The enzyme catalyses trans-4-hydroxy-L-proline = cis-4-hydroxy-D-proline. Functionally, catalyzes the epimerization of trans-4-hydroxy-L-proline (t4LHyp) to cis-4-hydroxy-D-proline (c4DHyp). Is likely involved in a degradation pathway that converts t4LHyp to alpha-ketoglutarate. Can also catalyze the epimerization of trans-3-hydroxy-L-proline (t3LHyp) to cis-3-hydroxy-D-proline (c3DHyp), albeit with 200-fold lower efficiency. This Pseudomonas putida (strain ATCC 700007 / DSM 6899 / JCM 31910 / BCRC 17059 / LMG 24140 / F1) protein is 4-hydroxyproline 2-epimerase.